A 287-amino-acid chain; its full sequence is ATP synthase gamma chain (287 aa).

This sequence belongs to the ATPase gamma chain family. As to quaternary structure, F-type ATPases have 2 components, CF(1) - the catalytic core - and CF(0) - the membrane proton channel. CF(1) has five subunits: alpha(3), beta(3), gamma(1), delta(1), epsilon(1). CF(0) has three main subunits: a, b and c.

The protein localises to the cell inner membrane. Produces ATP from ADP in the presence of a proton gradient across the membrane. The gamma chain is believed to be important in regulating ATPase activity and the flow of protons through the CF(0) complex. This is ATP synthase gamma chain from Klebsiella pneumoniae subsp. pneumoniae (strain ATCC 700721 / MGH 78578).